The primary structure comprises 355 residues: Phosphatidylinositol:ceramide inositolphosphotransferase (355 aa).

Topologically, residues 1–44 are cytoplasmic; the sequence is MISYPFFSLSPPGLVPPPMAVPPVEMYSGSFWNRMRKPLPLRTQ. A helical membrane pass occupies residues 45-65; that stretch reads VIRFTVVFVIVSFILAVALQI. At 66–89 the chain is on the extracellular side; it reads THERMPDPKVTKPLPDLGFELLTK. The chain crosses the membrane as a helical span at residues 90–110; it reads ISFLSVVTDVLIAFLSSLSFF. The Cytoplasmic segment spans residues 111–165; that stretch reads TLWKLYLLHRHCVGSGEPELPCNIPGVSRFFLSVWLCKENCRIELRNVHTIAWIR. Residues 166–186 traverse the membrane as a helical segment; that stretch reads FITSYALLLLFRSLVIVMTSM. The Extracellular segment spans residues 187–205; the sequence is PTPVDKCQNPPKIENPVKN. Residues 206-226 traverse the membrane as a helical segment; the sequence is VILTVLTAGGGSIHCGDLMYS. Over 227 to 251 the chain is Cytoplasmic; it reads GHTVILTLHLMFHWIYGAMVHWSFR. Catalysis depends on residues His228, His271, and Asp275. A helical membrane pass occupies residues 252–272; sequence PVVTVVAIFGYYCIVASRSHY. At 273 to 275 the chain is on the extracellular side; that stretch reads TDD. Residues 276–296 traverse the membrane as a helical segment; sequence VLVAIYLTIATFIAVGHNADG. Topologically, residues 297–355 are cytoplasmic; it reads APWQLQLFIRWLPCCGANSREVTEDSQPVMVAFKSEAVDELRERDDSAGLSCEVSTNEV.

This sequence belongs to the sphingomyelin synthase family.

The protein resides in the membrane. Its function is as follows. Bidirectional lipid inositolphosphotransferase capable of converting phosphatidylinositol (PI) and ceramide to inositol-phosphorylceramide (IPC) and diacylglycerol (DAG) and vice versa. Direction is dependent on the relative concentrations of DAG and ceramide as phosphoinositol acceptors. Does not function strictly as a SM synthase. Essential for viability of the pathogenic bloodstream stage of this human protozoan parasite and, consequently, can be considered as potential drug target. The protein is Phosphatidylinositol:ceramide inositolphosphotransferase of Trypanosoma brucei brucei (strain 927/4 GUTat10.1).